The chain runs to 675 residues: Transmembrane protein 232 (675 aa).

A helical membrane pass occupies residues 163–183; it reads LVKIGYLIFLRLFVFFLHGHL. A coiled-coil region spans residues 598–634; sequence WQKDMEARKREEEAYKAQNQKDKEEKEKIHFQEIMKQ. Positions 605 to 624 are disordered; that stretch reads RKREEEAYKAQNQKDKEEKE.

High expression in the testis and weak expression levels in the spleen, liver, brain, uterus, lung, epididymis and kidney. Not detected in the heart or ovary.

Its subcellular location is the membrane. In terms of biological role, plays a critical role for male fertility and sperm motility by regulating sperm cytoplasm removal and maintaining axoneme integrity. This chain is Transmembrane protein 232 (Tmem232), found in Mus musculus (Mouse).